Here is an 860-residue protein sequence, read N- to C-terminus: MQEQYRPEEIESKVQLHWDEKRTFEVTEDESKEKYYCLSMLPYPSGRLHMGHVRNYTIGDVIARYQRMLGKNVLQPIGWDAFGLPAEGAAVKNNTAPAPWTYDNIAYMKNQLKMLGFGYDWSRELATCTPEYYRWEQKFFTELYKKGLVYKKTSAVNWCPNDQTVLANEQVIDGCCWRCDTKVERKEIPQWFIKITAYADELLNDLDKLDHWPDTVKTMQRNWIGRSEGVEITFNVNDYDNTLTVYTTRPDTFMGCTYLAVAAGHPLAQKAAENNPELAAFIDECRNTKVAEAEMATMEKKGVDTGFKAVHPLTGEEIPVWAANFVLMEYGTGAVMAVPGHDQRDYEFASKYGLNIKPVILAADGSEPDLSQQALTEKGVLFNSGEFNGLDHEAAFNAIADKLTAMGVGERKVNYRLRDWGVSRQRYWGAPIPMVTLEDGTVMPTPDDQLPVILPEDVVMDGITSPIKADPEWAKTTVNGMPALRETDTFDTFMESSWYYARYTCPEYKEGMLDSEAANYWLPVDIYIGGIEHAIMHLLYFRFFHKLMRDAGMVNSDEPAKQLLCQGMVLADAFYYVGENGERNWVSPVDAIVERDEKGRIVKAKDAAGHELVYTGMSKMSKSKNNGIDPQVMVERYGADTVRLFMMFASPADMTLEWQESGVEGANRFLKRVWKLVYEHTAKGDVAALNVDALTEDQKALRRDVHKTIAKVTDDIGRRQTFNTAIAAIMELMNKLAKAPTDGEQDRALMQEALQAVVRMLNPFTPHICFTLWQELKGEGDIDNAPWPVADEKAMVEDSTLVVVQVNGKVRAKITVPVDATEEQVRERAGQEHLVAKYLDGVTVRKVIYVPGKLLNLVVG.

The 'HIGH' region signature appears at 73 to 83 (VLQPIGWDAFG). The 'KMSKS' region signature appears at 650-654 (SPADM). Asp-653 is an ATP binding site.

It belongs to the class-I aminoacyl-tRNA synthetase family.

The protein resides in the cytoplasm. It carries out the reaction tRNA(Leu) + L-leucine + ATP = L-leucyl-tRNA(Leu) + AMP + diphosphate. In Shigella flexneri, this protein is Leucine--tRNA ligase.